Reading from the N-terminus, the 412-residue chain is 8-amino-7-oxononanoate synthase (412 aa).

Residue Arg28 participates in substrate binding. 115–116 serves as a coordination point for pyridoxal 5'-phosphate; the sequence is GY. Residue His140 coordinates substrate. Ser186, His214, and Thr246 together coordinate pyridoxal 5'-phosphate. Lys249 carries the post-translational modification N6-(pyridoxal phosphate)lysine. Thr367 serves as a coordination point for substrate.

The protein belongs to the class-II pyridoxal-phosphate-dependent aminotransferase family. BioF subfamily. As to quaternary structure, homodimer. The cofactor is pyridoxal 5'-phosphate.

The catalysed reaction is 6-carboxyhexanoyl-[ACP] + L-alanine + H(+) = (8S)-8-amino-7-oxononanoate + holo-[ACP] + CO2. It participates in cofactor biosynthesis; biotin biosynthesis. Functionally, catalyzes the decarboxylative condensation of pimeloyl-[acyl-carrier protein] and L-alanine to produce 8-amino-7-oxononanoate (AON), [acyl-carrier protein], and carbon dioxide. The sequence is that of 8-amino-7-oxononanoate synthase from Paracidovorax citrulli (strain AAC00-1) (Acidovorax citrulli).